We begin with the raw amino-acid sequence, 134 residues long: Small ribosomal subunit protein uS8c (134 aa).

It belongs to the universal ribosomal protein uS8 family. In terms of assembly, part of the 30S ribosomal subunit.

Its subcellular location is the plastid. The protein resides in the chloroplast. Its function is as follows. One of the primary rRNA binding proteins, it binds directly to 16S rRNA central domain where it helps coordinate assembly of the platform of the 30S subunit. The polypeptide is Small ribosomal subunit protein uS8c (rps8) (Phaseolus vulgaris (Kidney bean)).